The following is a 120-amino-acid chain: Large ribosomal subunit protein eL34 (120 aa).

The protein belongs to the eukaryotic ribosomal protein eL34 family.

The polypeptide is Large ribosomal subunit protein eL34 (RPL34) (Nicotiana tabacum (Common tobacco)).